The sequence spans 256 residues: Chitinase 11 (256 aa).

Residues 1–22 (MRRLLPLAGATLLIAAAGGASG) form the signal peptide. Intrachain disulfides connect Cys48/Cys109 and Cys214/Cys247. The active-site Proton donor is the Glu91.

Belongs to the glycosyl hydrolase 19 family. Chitinase class II subfamily. As to expression, expressed in leaves and at lower levels in roots, sheaths and meristems.

The catalysed reaction is Random endo-hydrolysis of N-acetyl-beta-D-glucosaminide (1-&gt;4)-beta-linkages in chitin and chitodextrins.. The protein is Chitinase 11 (Cht11) of Oryza sativa subsp. japonica (Rice).